The sequence spans 629 residues: 1-deoxy-D-xylulose-5-phosphate synthase (629 aa).

Residues His72 and 113–115 (GHS) contribute to the thiamine diphosphate site. Residue Asp144 coordinates Mg(2+). Residues 145-146 (GA), Asn173, Tyr284, and Glu366 each bind thiamine diphosphate. Asn173 lines the Mg(2+) pocket.

Belongs to the transketolase family. DXPS subfamily. Homodimer. It depends on Mg(2+) as a cofactor. Requires thiamine diphosphate as cofactor.

It catalyses the reaction D-glyceraldehyde 3-phosphate + pyruvate + H(+) = 1-deoxy-D-xylulose 5-phosphate + CO2. The protein operates within metabolic intermediate biosynthesis; 1-deoxy-D-xylulose 5-phosphate biosynthesis; 1-deoxy-D-xylulose 5-phosphate from D-glyceraldehyde 3-phosphate and pyruvate: step 1/1. Functionally, catalyzes the acyloin condensation reaction between C atoms 2 and 3 of pyruvate and glyceraldehyde 3-phosphate to yield 1-deoxy-D-xylulose-5-phosphate (DXP). The sequence is that of 1-deoxy-D-xylulose-5-phosphate synthase from Halalkalibacterium halodurans (strain ATCC BAA-125 / DSM 18197 / FERM 7344 / JCM 9153 / C-125) (Bacillus halodurans).